We begin with the raw amino-acid sequence, 298 residues long: N-acetylmuramic acid 6-phosphate etherase (298 aa).

Residues 55–218 (IHAQVSGGGR…STGLMIKSGK (164 aa)) form the SIS domain. The Proton donor role is filled by glutamate 83. The active site involves glutamate 114.

Belongs to the GCKR-like family. MurNAc-6-P etherase subfamily. Homodimer.

The enzyme catalyses N-acetyl-D-muramate 6-phosphate + H2O = N-acetyl-D-glucosamine 6-phosphate + (R)-lactate. The protein operates within amino-sugar metabolism; 1,6-anhydro-N-acetylmuramate degradation. Its pathway is amino-sugar metabolism; N-acetylmuramate degradation. It functions in the pathway cell wall biogenesis; peptidoglycan recycling. Its function is as follows. Specifically catalyzes the cleavage of the D-lactyl ether substituent of MurNAc 6-phosphate, producing GlcNAc 6-phosphate and D-lactate. Together with AnmK, is also required for the utilization of anhydro-N-acetylmuramic acid (anhMurNAc) either imported from the medium or derived from its own cell wall murein, and thus plays a role in cell wall recycling. The polypeptide is N-acetylmuramic acid 6-phosphate etherase (Shigella flexneri).